A 151-amino-acid chain; its full sequence is Ribosome maturation factor RimP (151 aa).

Belongs to the RimP family.

It is found in the cytoplasm. In terms of biological role, required for maturation of 30S ribosomal subunits. This Desulfotalea psychrophila (strain LSv54 / DSM 12343) protein is Ribosome maturation factor RimP.